Reading from the N-terminus, the 268-residue chain is Shikimate dehydrogenase (NADP(+)) (268 aa).

Thr-62 contributes to the shikimate binding site. The active-site Proton acceptor is Lys-66. Glu-78 contacts NADP(+). 2 residues coordinate shikimate: Asn-87 and Asp-102. Residues 126 to 130 (GSGGI) and Leu-207 each bind NADP(+). Tyr-209 is a shikimate binding site. Gly-230 lines the NADP(+) pocket.

It belongs to the shikimate dehydrogenase family. As to quaternary structure, homodimer.

It catalyses the reaction shikimate + NADP(+) = 3-dehydroshikimate + NADPH + H(+). It participates in metabolic intermediate biosynthesis; chorismate biosynthesis; chorismate from D-erythrose 4-phosphate and phosphoenolpyruvate: step 4/7. Involved in the biosynthesis of the chorismate, which leads to the biosynthesis of aromatic amino acids. Catalyzes the reversible NADPH linked reduction of 3-dehydroshikimate (DHSA) to yield shikimate (SA). This chain is Shikimate dehydrogenase (NADP(+)), found in Thermoplasma acidophilum (strain ATCC 25905 / DSM 1728 / JCM 9062 / NBRC 15155 / AMRC-C165).